The primary structure comprises 317 residues: Beta-ketoacyl-[acyl-carrier-protein] synthase III (317 aa).

Active-site residues include Cys112 and His244. Residues 245 to 249 (QANIR) form an ACP-binding region. Asn274 is an active-site residue.

It belongs to the thiolase-like superfamily. FabH family. As to quaternary structure, homodimer.

Its subcellular location is the cytoplasm. The enzyme catalyses malonyl-[ACP] + acetyl-CoA + H(+) = 3-oxobutanoyl-[ACP] + CO2 + CoA. Its pathway is lipid metabolism; fatty acid biosynthesis. Functionally, catalyzes the condensation reaction of fatty acid synthesis by the addition to an acyl acceptor of two carbons from malonyl-ACP. Catalyzes the first condensation reaction which initiates fatty acid synthesis and may therefore play a role in governing the total rate of fatty acid production. Possesses both acetoacetyl-ACP synthase and acetyl transacylase activities. Its substrate specificity determines the biosynthesis of branched-chain and/or straight-chain of fatty acids. This Rickettsia akari (strain Hartford) protein is Beta-ketoacyl-[acyl-carrier-protein] synthase III.